The sequence spans 124 residues: Kinocilin (124 aa).

The next 2 helical transmembrane spans lie at 13 to 33 (LQLA…GISV) and 40 to 60 (MGGV…YPFL). A disordered region spans residues 80-124 (PHPGADHGEGRSSTNGNKEGARSSLSTVSRTLEKLKPGTRGAEEC). Positions 90–109 (RSSTNGNKEGARSSLSTVSR) are enriched in polar residues. Positions 110-124 (TLEKLKPGTRGAEEC) are enriched in basic and acidic residues.

The protein resides in the membrane. Functionally, may play a role in stabilizing dense microtubular networks or in vesicular trafficking. The chain is Kinocilin (KNCN) from Homo sapiens (Human).